The primary structure comprises 286 residues: 2,3,4,5-tetrahydropyridine-2,6-dicarboxylate N-succinyltransferase (286 aa).

The protein belongs to the transferase hexapeptide repeat family.

Its subcellular location is the cytoplasm. It carries out the reaction (S)-2,3,4,5-tetrahydrodipicolinate + succinyl-CoA + H2O = (S)-2-succinylamino-6-oxoheptanedioate + CoA. It functions in the pathway amino-acid biosynthesis; L-lysine biosynthesis via DAP pathway; LL-2,6-diaminopimelate from (S)-tetrahydrodipicolinate (succinylase route): step 1/3. The polypeptide is 2,3,4,5-tetrahydropyridine-2,6-dicarboxylate N-succinyltransferase (Rhizobium leguminosarum bv. trifolii (strain WSM2304)).